A 310-amino-acid polypeptide reads, in one-letter code: Dermonecrotic toxin LiSicTox-alphaII2 (310 aa).

A signal peptide spans 1 to 18; it reads MLLRIALILGCWSILSEG. The propeptide occupies 19 to 26; the sequence is AENDIAER. The active site involves histidine 38. Mg(2+) contacts are provided by glutamate 58 and aspartate 60. Histidine 74 acts as the Nucleophile in catalysis. Intrachain disulfides connect cysteine 78–cysteine 84 and cysteine 80–cysteine 224. A glycan (N-linked (GlcNAc...) asparagine) is linked at asparagine 99. Aspartate 118 is a Mg(2+) binding site.

It belongs to the arthropod phospholipase D family. Class II subfamily. Mg(2+) is required as a cofactor. As to expression, expressed by the venom gland.

It is found in the secreted. The catalysed reaction is an N-(acyl)-sphingosylphosphocholine = an N-(acyl)-sphingosyl-1,3-cyclic phosphate + choline. It catalyses the reaction an N-(acyl)-sphingosylphosphoethanolamine = an N-(acyl)-sphingosyl-1,3-cyclic phosphate + ethanolamine. The enzyme catalyses a 1-acyl-sn-glycero-3-phosphocholine = a 1-acyl-sn-glycero-2,3-cyclic phosphate + choline. It carries out the reaction a 1-acyl-sn-glycero-3-phosphoethanolamine = a 1-acyl-sn-glycero-2,3-cyclic phosphate + ethanolamine. Dermonecrotic toxins cleave the phosphodiester linkage between the phosphate and headgroup of certain phospholipids (sphingolipid and lysolipid substrates), forming an alcohol (often choline) and a cyclic phosphate. This toxin acts on sphingomyelin (SM). It may also act on ceramide phosphoethanolamine (CPE), lysophosphatidylcholine (LPC) and lysophosphatidylethanolamine (LPE), but not on lysophosphatidylserine (LPS), and lysophosphatidylglycerol (LPG). It acts by transphosphatidylation, releasing exclusively cyclic phosphate products as second products. Induces dermonecrosis, hemolysis, increased vascular permeability, edema, inflammatory response, and platelet aggregation. The protein is Dermonecrotic toxin LiSicTox-alphaII2 of Loxosceles intermedia (Brown spider).